Reading from the N-terminus, the 581-residue chain is Sodium/hydrogen exchanger 8 (581 aa).

11 helical membrane passes run 60-80 (MTIFFSLLVLAICIILVHLLI), 84-104 (LHFLPESVAVVSLGILMGAVI), 123-143 (PNMFFLLLLPPIIFESGYSLH), 156-176 (LFAVFGTAISAFVVGGGIYFL), 191-211 (FAFGSLISAVDPVATIAIFNA), 264-284 (FLKMFFGSAALGTLTGLISAL), 311-331 (GLAEGISLSGIMAILFSGIVM), 354-374 (VAFLCETCVFAFLGLSIFSFP), 379-399 (ISFVIWCIVLVLFGRAVNIFP), 417-437 (MFIMWFSGLRGAIPYALSLHL), and 451-471 (TTIVIVLFTILLLGGSTMPLI). Thr510 bears the Phosphothreonine mark. Residues Ser571 and Ser573 each carry the phosphoserine modification.

It belongs to the monovalent cation:proton antiporter 1 (CPA1) transporter (TC 2.A.36) family. In terms of tissue distribution, ubiquitous. Strongly expressed in skeletal muscle and kidney. Detected throughout the entire gastrointestinal tract, with high expression detected in stomach, duodenum and ascending colon.

Its subcellular location is the golgi apparatus membrane. The protein resides in the golgi apparatus. The protein localises to the trans-Golgi network membrane. It is found in the endosome. It localises to the multivesicular body membrane. Its subcellular location is the apical cell membrane. The protein resides in the cytoplasmic vesicle. The protein localises to the secretory vesicle. It is found in the acrosome. The enzyme catalyses Na(+)(in) + H(+)(out) = Na(+)(out) + H(+)(in). Its activity is regulated as follows. HOE642 inhibits SLC9A8 activity. Its function is as follows. Na(+)/H(+) antiporter. Mediates the electoneutral exchange of intracellular H(+) ions for extracellular Na(+) in 1:1 stoichiometry. Acts as an Na(+)/H(+) exchanger in the trans-Golgi. Contributes to the regulation of pH regulation of Golgi apparatus, and consequently, in protein trafficking and endosomal morphology. In germ cells, plays a crucial role in acrosome biogenesis and sperm development, probably by playing a role in the fusion of the Golgi-derived vesicles that form the acrosomal cap. Can also be active at the cell surface of specialized cells. In the small intestine, at the cell membrane, plays a major physiological role in transepithelial absorption of Na(+) and regulates intracellular pH homeostasis of intestinal epithelial cells. Acts as an important regulator of mucosal integrity in the intestine and in the stomach, could mediate the pH fluctuation necessary for mucin exocytosis or assist membrane trafficking of other proteins. Plays a role in photoreceptor survival and in the maintenance of intracellular pH homeostasis in retinal pigment epithelium (RPE cells). The polypeptide is Sodium/hydrogen exchanger 8 (Homo sapiens (Human)).